The sequence spans 581 residues: Arginine--tRNA ligase (581 aa).

The short motif at Ala131–His141 is the 'HIGH' region element.

Belongs to the class-I aminoacyl-tRNA synthetase family. As to quaternary structure, monomer.

Its subcellular location is the cytoplasm. The enzyme catalyses tRNA(Arg) + L-arginine + ATP = L-arginyl-tRNA(Arg) + AMP + diphosphate. In Nitrosospira multiformis (strain ATCC 25196 / NCIMB 11849 / C 71), this protein is Arginine--tRNA ligase.